We begin with the raw amino-acid sequence, 486 residues long: Membrane-bound lytic murein transglycosylase F (486 aa).

Residues 1 to 26 (MFSPMALRPRCAKWLIVTGLFLMLGA) form the signal peptide. Positions 27–267 (CVEKPSTLER…RLKDRYYGHV (241 aa)) are non-LT domain. Residues 268–486 (DVLGYVGAYT…TKPPEENPPL (219 aa)) are LT domain. Residue Glu314 is part of the active site. The segment at 464 to 486 (VAEGNLHVPGVNKTKPPEENPPL) is disordered.

The protein in the N-terminal section; belongs to the bacterial solute-binding protein 3 family. This sequence in the C-terminal section; belongs to the transglycosylase Slt family.

The protein localises to the cell outer membrane. The enzyme catalyses Exolytic cleavage of the (1-&gt;4)-beta-glycosidic linkage between N-acetylmuramic acid (MurNAc) and N-acetylglucosamine (GlcNAc) residues in peptidoglycan, from either the reducing or the non-reducing ends of the peptidoglycan chains, with concomitant formation of a 1,6-anhydrobond in the MurNAc residue.. Functionally, murein-degrading enzyme that degrades murein glycan strands and insoluble, high-molecular weight murein sacculi, with the concomitant formation of a 1,6-anhydromuramoyl product. Lytic transglycosylases (LTs) play an integral role in the metabolism of the peptidoglycan (PG) sacculus. Their lytic action creates space within the PG sacculus to allow for its expansion as well as for the insertion of various structures such as secretion systems and flagella. This is Membrane-bound lytic murein transglycosylase F from Pseudomonas fluorescens (strain ATCC BAA-477 / NRRL B-23932 / Pf-5).